We begin with the raw amino-acid sequence, 327 residues long: Aspartate--ammonia ligase (327 aa).

The protein belongs to the class-II aminoacyl-tRNA synthetase family. AsnA subfamily.

It localises to the cytoplasm. The catalysed reaction is L-aspartate + NH4(+) + ATP = L-asparagine + AMP + diphosphate + H(+). The protein operates within amino-acid biosynthesis; L-asparagine biosynthesis; L-asparagine from L-aspartate (ammonia route): step 1/1. The polypeptide is Aspartate--ammonia ligase (Bacillus anthracis (strain A0248)).